The following is a 627-amino-acid chain: Xaa-Pro aminopeptidase 1 (627 aa).

Residues Arg-88 and His-405 each contribute to the a peptide site. Asp-424, Asp-435, and His-498 together coordinate Mn(2+). A peptide is bound by residues His-498, His-507, and Glu-533. Mn(2+) contacts are provided by Glu-533 and Glu-547.

It belongs to the peptidase M24B family. As to quaternary structure, homodimer. Requires Mn(2+) as cofactor.

It localises to the cytoplasm. The protein localises to the cytosol. It catalyses the reaction Release of any N-terminal amino acid, including proline, that is linked to proline, even from a dipeptide or tripeptide.. Functionally, metalloaminopeptidase that catalyzes the removal of a penultimate prolyl residue from the N-termini of peptides, such as Arg-Pro-Pro. The chain is Xaa-Pro aminopeptidase 1 (xpnpep1) from Dictyostelium discoideum (Social amoeba).